The following is a 380-amino-acid chain: Putative 8-amino-7-oxononanoate synthase (380 aa).

R18 is a substrate binding site. Residue 106–107 (GY) coordinates pyridoxal 5'-phosphate. H131 contributes to the substrate binding site. Pyridoxal 5'-phosphate-binding positions include S179, 205–208 (DEAH), and 236–239 (TFGK). At K239 the chain carries N6-(pyridoxal phosphate)lysine. T352 is a substrate binding site.

This sequence belongs to the class-II pyridoxal-phosphate-dependent aminotransferase family. BioF subfamily. In terms of assembly, homodimer. Requires pyridoxal 5'-phosphate as cofactor.

It carries out the reaction 6-carboxyhexanoyl-[ACP] + L-alanine + H(+) = (8S)-8-amino-7-oxononanoate + holo-[ACP] + CO2. It functions in the pathway cofactor biosynthesis; biotin biosynthesis. Its function is as follows. Catalyzes the decarboxylative condensation of pimeloyl-[acyl-carrier protein] and L-alanine to produce 8-amino-7-oxononanoate (AON), [acyl-carrier protein], and carbon dioxide. In Neisseria gonorrhoeae (strain ATCC 700825 / FA 1090), this protein is Putative 8-amino-7-oxononanoate synthase (bioF).